A 610-amino-acid chain; its full sequence is 1,8-cineol synthase, chloroplastic (610 aa).

A chloroplast-targeting transit peptide spans 1 to 51 (MNHHLIITPIFHLQIMLPVATLKRPPPPAATCSIYSFSRGTPSLVSKARLS). (2E)-geranyl diphosphate-binding residues include R322, D359, D363, R500, and N503. Residues D359 and D363 each coordinate Mg(2+). The DDXXD motif signature appears at 359–363 (DDVYD). Mg(2+)-binding residues include N503, T507, and E511.

This sequence belongs to the terpene synthase family. Tpsb subfamily. Monomer. Requires Mg(2+) as cofactor. Mn(2+) is required as a cofactor. In terms of tissue distribution, confined to buds and flowers.

Its subcellular location is the plastid. It is found in the chloroplast. The enzyme catalyses (2E)-geranyl diphosphate + H2O = 1,8-cineole + diphosphate. The catalysed reaction is (2E)-geranyl diphosphate = limonene + diphosphate. It catalyses the reaction (2E)-geranyl diphosphate = sabinene + diphosphate. It carries out the reaction (2E)-geranyl diphosphate = (E)-beta-ocimene + diphosphate. The enzyme catalyses (2E)-geranyl diphosphate = beta-myrcene + diphosphate. The catalysed reaction is (2E)-geranyl diphosphate = alpha-pinene + diphosphate. It catalyses the reaction (2E)-geranyl diphosphate + H2O = (S)-alpha-terpineol + diphosphate. The protein operates within secondary metabolite biosynthesis; terpenoid biosynthesis. Functionally, monoterpene synthase involved in the biosynthesis of monoterpene natural products of the 'cineole cassette', volatile compounds present in floral scent. Catalyzes the conversion of (2E)-geranyl diphosphate (GPP) into 1,8-cineole and, as minor products, limonene, sabinene, (E)-beta-ocimene, beta-myrcene, alpha-pinene and alpha-terpineol. The sequence is that of 1,8-cineol synthase, chloroplastic from Nicotiana suaveolens (Australian tobacco).